A 247-amino-acid polypeptide reads, in one-letter code: Probable transcriptional regulatory protein GSU1074 (247 aa).

Belongs to the TACO1 family.

It localises to the cytoplasm. The chain is Probable transcriptional regulatory protein GSU1074 from Geobacter sulfurreducens (strain ATCC 51573 / DSM 12127 / PCA).